The sequence spans 49 residues: Large ribosomal subunit protein bL32 (49 aa).

Residues 25–49 (AKPVKDKDGTYKLPHHINPTTGEYK) form a disordered region.

The protein belongs to the bacterial ribosomal protein bL32 family.

This is Large ribosomal subunit protein bL32 from Sulfurimonas denitrificans (strain ATCC 33889 / DSM 1251) (Thiomicrospira denitrificans (strain ATCC 33889 / DSM 1251)).